We begin with the raw amino-acid sequence, 177 residues long: Adenine phosphoribosyltransferase (177 aa).

It belongs to the purine/pyrimidine phosphoribosyltransferase family. In terms of assembly, homodimer.

The protein resides in the cytoplasm. The enzyme catalyses AMP + diphosphate = 5-phospho-alpha-D-ribose 1-diphosphate + adenine. Its pathway is purine metabolism; AMP biosynthesis via salvage pathway; AMP from adenine: step 1/1. In terms of biological role, catalyzes a salvage reaction resulting in the formation of AMP, that is energically less costly than de novo synthesis. The sequence is that of Adenine phosphoribosyltransferase from Prosthecochloris aestuarii (strain DSM 271 / SK 413).